Consider the following 215-residue polypeptide: Large ribosomal subunit protein uL3 (215 aa).

An N5-methylglutamine modification is found at Q156.

It belongs to the universal ribosomal protein uL3 family. As to quaternary structure, part of the 50S ribosomal subunit. Forms a cluster with proteins L14 and L19. Post-translationally, methylated by PrmB.

In terms of biological role, one of the primary rRNA binding proteins, it binds directly near the 3'-end of the 23S rRNA, where it nucleates assembly of the 50S subunit. The sequence is that of Large ribosomal subunit protein uL3 from Xylella fastidiosa (strain 9a5c).